The sequence spans 173 residues: NADH-ubiquinone oxidoreductase chain 6 (173 aa).

5 helical membrane-spanning segments follow: residues 1–21 (MTYFVIFLGICFMLGVLAVAS), 27–47 (YGVVGLVVASVMGCGWLVSLG), 48–68 (VSFVSLALFLVYLGGMLVVFV), 87–107 (VVGYGLGFVLVVWMGVVLGGL), and 139–159 (CGVGLFLVAGWGLLLALFVVL).

It belongs to the complex I subunit 6 family. As to quaternary structure, core subunit of respiratory chain NADH dehydrogenase (Complex I) which is composed of 45 different subunits.

The protein localises to the mitochondrion inner membrane. The catalysed reaction is a ubiquinone + NADH + 5 H(+)(in) = a ubiquinol + NAD(+) + 4 H(+)(out). Its function is as follows. Core subunit of the mitochondrial membrane respiratory chain NADH dehydrogenase (Complex I) which catalyzes electron transfer from NADH through the respiratory chain, using ubiquinone as an electron acceptor. Essential for the catalytic activity and assembly of complex I. This Gallus gallus (Chicken) protein is NADH-ubiquinone oxidoreductase chain 6 (MT-ND6).